We begin with the raw amino-acid sequence, 168 residues long: Large ribosomal subunit protein uL10 (168 aa).

This sequence belongs to the universal ribosomal protein uL10 family. Part of the ribosomal stalk of the 50S ribosomal subunit. The N-terminus interacts with L11 and the large rRNA to form the base of the stalk. The C-terminus forms an elongated spine to which L12 dimers bind in a sequential fashion forming a multimeric L10(L12)X complex.

Its function is as follows. Forms part of the ribosomal stalk, playing a central role in the interaction of the ribosome with GTP-bound translation factors. The protein is Large ribosomal subunit protein uL10 of Clostridium acetobutylicum (strain ATCC 824 / DSM 792 / JCM 1419 / IAM 19013 / LMG 5710 / NBRC 13948 / NRRL B-527 / VKM B-1787 / 2291 / W).